The sequence spans 258 residues: Acyl-[acyl-carrier-protein]--UDP-N-acetylglucosamine O-acyltransferase (258 aa).

Belongs to the transferase hexapeptide repeat family. LpxA subfamily. In terms of assembly, homotrimer.

It localises to the cytoplasm. The enzyme catalyses a (3R)-hydroxyacyl-[ACP] + UDP-N-acetyl-alpha-D-glucosamine = a UDP-3-O-[(3R)-3-hydroxyacyl]-N-acetyl-alpha-D-glucosamine + holo-[ACP]. Its pathway is glycolipid biosynthesis; lipid IV(A) biosynthesis; lipid IV(A) from (3R)-3-hydroxytetradecanoyl-[acyl-carrier-protein] and UDP-N-acetyl-alpha-D-glucosamine: step 1/6. Involved in the biosynthesis of lipid A, a phosphorylated glycolipid that anchors the lipopolysaccharide to the outer membrane of the cell. In Pseudomonas putida (strain W619), this protein is Acyl-[acyl-carrier-protein]--UDP-N-acetylglucosamine O-acyltransferase.